We begin with the raw amino-acid sequence, 228 residues long: 2,3-bisphosphoglycerate-dependent phosphoglycerate mutase (228 aa).

Substrate-binding positions include 8-15 (RHGQSAWN), 21-22 (TG), R60, 87-90 (ERHY), K98, 114-115 (RR), and 180-181 (GN). The Tele-phosphohistidine intermediate role is filled by H9. E87 serves as the catalytic Proton donor/acceptor.

It belongs to the phosphoglycerate mutase family. BPG-dependent PGAM subfamily. Homodimer.

The enzyme catalyses (2R)-2-phosphoglycerate = (2R)-3-phosphoglycerate. Its pathway is carbohydrate degradation; glycolysis; pyruvate from D-glyceraldehyde 3-phosphate: step 3/5. Catalyzes the interconversion of 2-phosphoglycerate and 3-phosphoglycerate. In Rhizorhabdus wittichii (strain DSM 6014 / CCUG 31198 / JCM 15750 / NBRC 105917 / EY 4224 / RW1) (Sphingomonas wittichii), this protein is 2,3-bisphosphoglycerate-dependent phosphoglycerate mutase.